Here is a 594-residue protein sequence, read N- to C-terminus: (-)-endo-fenchol synthase, chloroplastic (594 aa).

Residues 1–50 (MSSLVMHVGIVNKPAITYLPTLSRRASNLHNVSSTRLQTSCSLQLDYKPV) constitute a chloroplast transit peptide. Residues D348, D352, D492, and E500 each coordinate Mg(2+). The DDXXD motif signature appears at 348-352 (DDIYD).

Belongs to the terpene synthase family. Tpsa subfamily. Mg(2+) is required as a cofactor. Requires Mn(2+) as cofactor. Expressed at low levels in leaves.

It localises to the plastid. Its subcellular location is the chloroplast. The catalysed reaction is (2E)-geranyl diphosphate = alpha-pinene + diphosphate. It carries out the reaction (2E)-geranyl diphosphate + H2O = (1S,2S,4R)-endo-fenchol + diphosphate. It catalyses the reaction (2E)-geranyl diphosphate = limonene + diphosphate. Its pathway is secondary metabolite biosynthesis; terpenoid biosynthesis. Its function is as follows. Monoterpene synthase involved in the biosynthesis of volatile compounds widely used in aromatherapy and folk medicine, and present in culinary herbs. Mediates the conversion of (2E)-geranyl diphosphate (GPP) into alpha fenchol, limonene and alpha-pinene and, as minor compounds, into beta-myrcene, alpha-terpinolene and alpha-phellandrene. The sequence is that of (-)-endo-fenchol synthase, chloroplastic from Lavandula stoechas (Butterfly lavender).